The primary structure comprises 146 residues: Large ribosomal subunit protein bL21 (146 aa).

The segment at 115 to 146 is disordered; the sequence is KSISLGKSAPKSSAKKETVKKETKPKSEKSTN. Basic and acidic residues predominate over residues 128-146; that stretch reads AKKETVKKETKPKSEKSTN.

Belongs to the bacterial ribosomal protein bL21 family. Part of the 50S ribosomal subunit. Contacts protein L20.

This protein binds to 23S rRNA in the presence of protein L20. The sequence is that of Large ribosomal subunit protein bL21 from Prochlorococcus marinus (strain MIT 9312).